The sequence spans 213 residues: Cytochrome b6 (213 aa).

A helical membrane pass occupies residues 30–50 (IFYCLGGLTLLAFLVQCVTGL). Residue Cys-33 coordinates heme c. 2 residues coordinate heme b: His-84 and His-98. Helical transmembrane passes span 88–108 (ANLM…TGSF), 114–134 (LNWL…FTGY), and 184–204 (LHVM…FIMI). Heme b-binding residues include His-185 and His-200.

Belongs to the cytochrome b family. PetB subfamily. The subunits of the cytochrome bc complex are a Rieske Fe-S protein (PetC), cytochrome b6 (PetB), subunit IV (PetD), and a diheme cytochrome c (PetX). The cofactor is heme b. Requires heme c as cofactor.

The protein localises to the cell membrane. Functionally, component of the cytochrome bc complex which donates electrons to the photosynthetic reaction center. The chain is Cytochrome b6 from Heliobacterium mobile (Heliobacillus mobilis).